Consider the following 156-residue polypeptide: Protein L* (156 aa).

Functionally, may be required for viral persistance in the host. The polypeptide is Protein L* (Theiler's murine encephalomyelitis virus (strain DA) (TMEV)).